We begin with the raw amino-acid sequence, 168 residues long: HTH-type transcriptional regulator IscR (168 aa).

The region spanning 2 to 131 is the HTH rrf2-type domain; that stretch reads KLTSKGRYAV…DGISLGELMV (130 aa). A DNA-binding region (H-T-H motif) is located at residues 28-51; it reads LADISERQGISLSYLEQLFSKLRK. Residues C92, C98, and C104 each contribute to the [2Fe-2S] cluster site.

[2Fe-2S] cluster serves as cofactor.

Functionally, regulates the transcription of several operons and genes involved in the biogenesis of Fe-S clusters and Fe-S-containing proteins. The protein is HTH-type transcriptional regulator IscR of Aliivibrio salmonicida (strain LFI1238) (Vibrio salmonicida (strain LFI1238)).